Consider the following 212-residue polypeptide: Cytidylate kinase (212 aa).

An ATP-binding site is contributed by 9 to 17 (GPAAAGKGT).

Belongs to the cytidylate kinase family. Type 1 subfamily.

The protein localises to the cytoplasm. The catalysed reaction is CMP + ATP = CDP + ADP. It catalyses the reaction dCMP + ATP = dCDP + ADP. The protein is Cytidylate kinase of Sinorhizobium medicae (strain WSM419) (Ensifer medicae).